Consider the following 231-residue polypeptide: 6-hydroxymethyl-7,8-dihydropterin pyrophosphokinase (231 aa).

This sequence belongs to the archaeal 6-HMPDK family. Mg(2+) is required as a cofactor.

The catalysed reaction is 6-hydroxymethyl-7,8-dihydropterin + ATP = (7,8-dihydropterin-6-yl)methyl diphosphate + AMP + H(+). Catalyzes the transfer of diphosphate from ATP to 6-hydroxymethyl-7,8-dihydropterin (6-HMD), leading to 6-hydroxymethyl-7,8-dihydropterin diphosphate (6-HMDP). To a lesser extent, can also use CTP, UTP, and GTP as the nucleotide triphosphate substrate. In Pyrococcus furiosus (strain ATCC 43587 / DSM 3638 / JCM 8422 / Vc1), this protein is 6-hydroxymethyl-7,8-dihydropterin pyrophosphokinase.